A 512-amino-acid chain; its full sequence is Cytochrome P450 monooxygenase pbrB (512 aa).

Residues 6 to 29 (LSFPAAVGAAFGAFAIYVVARCIY) form a helical membrane-spanning segment. Position 452 (C452) interacts with heme.

It belongs to the cytochrome P450 family. The cofactor is heme.

It localises to the membrane. It participates in secondary metabolite biosynthesis; terpenoid biosynthesis. In terms of biological role, cytochrome P450 monooxygenase; part of the gene cluster that mediates the biosynthesis of the sesquiterpenoid aspterric acid (AA), an inhibitor of dihydroxy-acid dehydratase (DHAD) effective as an herbicide. PbrB catalyzes the second step within the pathway and converts (-)-daucane produced by the terpene cyclase pbrA into an alpha-epoxy carboxylate intermediate which is further converted into the tricyclic aspterric acid by the cytochrome P450 monooxygenase pbrC. This chain is Cytochrome P450 monooxygenase pbrB, found in Penicillium brasilianum.